A 431-amino-acid polypeptide reads, in one-letter code: Ribonuclease TTHA0252 (431 aa).

The Zn(2+) site is built by His-59, His-61, Asp-63, His-64, His-141, Asp-162, and His-400.

Belongs to the metallo-beta-lactamase superfamily. RNA-metabolizing metallo-beta-lactamase-like family. As to quaternary structure, monomer. It depends on Zn(2+) as a cofactor.

The protein resides in the cytoplasm. Its activity is regulated as follows. Inhibited by cadmium, cobalt, manganese, magnesium, calcium and nickel ions. Has endoribonuclease activity towards 23S and 16S rRNA (in vitro). This Thermus thermophilus (strain ATCC 27634 / DSM 579 / HB8) protein is Ribonuclease TTHA0252.